We begin with the raw amino-acid sequence, 114 residues long: Putative membrane protein insertion efficiency factor (114 aa).

The protein belongs to the UPF0161 family.

Its subcellular location is the cell inner membrane. Could be involved in insertion of integral membrane proteins into the membrane. The sequence is that of Putative membrane protein insertion efficiency factor from Wolinella succinogenes (strain ATCC 29543 / DSM 1740 / CCUG 13145 / JCM 31913 / LMG 7466 / NCTC 11488 / FDC 602W) (Vibrio succinogenes).